A 931-amino-acid polypeptide reads, in one-letter code: Isoleucine--tRNA ligase (931 aa).

The 'HIGH' region motif lies at 57–67 (PYANGNIHIGH). Glu-555 serves as a coordination point for L-isoleucyl-5'-AMP. Positions 596-600 (KMSKS) match the 'KMSKS' region motif. Lys-599 contributes to the ATP binding site. Cys-890, Cys-893, Cys-910, and Cys-913 together coordinate Zn(2+).

This sequence belongs to the class-I aminoacyl-tRNA synthetase family. IleS type 1 subfamily. As to quaternary structure, monomer. Zn(2+) is required as a cofactor.

The protein resides in the cytoplasm. The enzyme catalyses tRNA(Ile) + L-isoleucine + ATP = L-isoleucyl-tRNA(Ile) + AMP + diphosphate. Catalyzes the attachment of isoleucine to tRNA(Ile). As IleRS can inadvertently accommodate and process structurally similar amino acids such as valine, to avoid such errors it has two additional distinct tRNA(Ile)-dependent editing activities. One activity is designated as 'pretransfer' editing and involves the hydrolysis of activated Val-AMP. The other activity is designated 'posttransfer' editing and involves deacylation of mischarged Val-tRNA(Ile). This is Isoleucine--tRNA ligase from Limosilactobacillus reuteri subsp. reuteri (strain JCM 1112) (Lactobacillus reuteri).